A 365-amino-acid chain; its full sequence is 1-deoxy-D-xylulose 5-phosphate reductoisomerase (365 aa).

NADPH contacts are provided by threonine 7, glycine 8, serine 9, isoleucine 10, alanine 31, lysine 32, asparagine 33, and asparagine 114. Lysine 115 is a binding site for 1-deoxy-D-xylulose 5-phosphate. Position 116 (glutamate 116) interacts with NADPH. Residue aspartate 134 participates in Mn(2+) binding. 4 residues coordinate 1-deoxy-D-xylulose 5-phosphate: serine 135, glutamate 136, serine 158, and histidine 181. Glutamate 136 is a binding site for Mn(2+). Glycine 187 provides a ligand contact to NADPH. 1-deoxy-D-xylulose 5-phosphate is bound by residues serine 194, asparagine 199, lysine 200, and glutamate 203. Position 203 (glutamate 203) interacts with Mn(2+).

The protein belongs to the DXR family. Mg(2+) serves as cofactor. The cofactor is Mn(2+).

It catalyses the reaction 2-C-methyl-D-erythritol 4-phosphate + NADP(+) = 1-deoxy-D-xylulose 5-phosphate + NADPH + H(+). It participates in isoprenoid biosynthesis; isopentenyl diphosphate biosynthesis via DXP pathway; isopentenyl diphosphate from 1-deoxy-D-xylulose 5-phosphate: step 1/6. Its function is as follows. Catalyzes the NADPH-dependent rearrangement and reduction of 1-deoxy-D-xylulose-5-phosphate (DXP) to 2-C-methyl-D-erythritol 4-phosphate (MEP). This is 1-deoxy-D-xylulose 5-phosphate reductoisomerase from Campylobacter curvus (strain 525.92).